Here is a 137-residue protein sequence, read N- to C-terminus: Acidic phospholipase A2 CC-PLA2-1 (137 aa).

The signal sequence occupies residues 1-16 (MRTLWIVAVWLMGVEG). Cystine bridges form between Cys-42/Cys-130, Cys-44/Cys-60, Cys-59/Cys-110, Cys-65/Cys-137, Cys-66/Cys-103, Cys-73/Cys-96, and Cys-90/Cys-101. 3 residues coordinate Ca(2+): Tyr-43, Gly-45, and Gly-47. Residue His-63 is part of the active site. Asp-64 serves as a coordination point for Ca(2+). The active site involves Asp-104.

The protein belongs to the phospholipase A2 family. Group II subfamily. D49 sub-subfamily. Ca(2+) serves as cofactor. Post-translationally, glycosylated (2.5%). Expressed by the venom gland.

It is found in the secreted. It carries out the reaction a 1,2-diacyl-sn-glycero-3-phosphocholine + H2O = a 1-acyl-sn-glycero-3-phosphocholine + a fatty acid + H(+). Snake venom phospholipase A2 (PLA2) that inhibits blood coagulation and platelet aggregation induced by ADP and arachidonic acid. Inhibits tumor cell adhesion and migration in a dose-dependent manner. Abolishes the attachment of human brain microvascular endothelial cells (HBMEC) to fibrinogen (IC(50)=0.12 uM) and dramatically reduces its adhesion to fibronectin (IC(50)=0.12 uM), whereas no effect is observed on type I collagen, vitronectin or laminin 1. Also blocks the cell migration toward fibronectin and fibrinogen. These effects are not dependent of the catalytic activity, but are mediated by alpha-5/beta-1 (ITGA5/ITGB1) and alpha-v-containing (ITGAV) integrins. Also shows anti-angiogenic activity in chicken chorioallantoix membrane assay. Has a relatively high enzymatic activity. PLA2 catalyzes the calcium-dependent hydrolysis of the 2-acyl groups in 3-sn-phosphoglycerides. In Cerastes cerastes (Horned desert viper), this protein is Acidic phospholipase A2 CC-PLA2-1.